The following is a 137-amino-acid chain: Keratin-associated protein 15-1 (137 aa).

This sequence belongs to the PMG family. In terms of assembly, interacts with hair keratins.

In the hair cortex, hair keratin intermediate filaments are embedded in an interfilamentous matrix, consisting of hair keratin-associated proteins (KRTAP), which are essential for the formation of a rigid and resistant hair shaft through their extensive disulfide bond cross-linking with abundant cysteine residues of hair keratins. The matrix proteins include the high-sulfur and high-glycine-tyrosine keratins. This Homo sapiens (Human) protein is Keratin-associated protein 15-1 (KRTAP15-1).